The primary structure comprises 2512 residues: Fatty acid synthase (2512 aa).

N-acetylglutamate is present on E2. Positions E2 to P406 constitute a Ketosynthase family 3 (KS3) domain. Catalysis depends on for beta-ketoacyl synthase activity residues C161, H293, and H331. The acyl and malonyl transferases stretch occupies residues G427 to F815. The For acyl/malonyl transferase activity role is filled by S580. Residues D646–T647, F670, and R772 contribute to the an acyl-CoA site. The segment at P844–K967 is N-terminal hotdog fold. In terms of domain architecture, PKS/mFAS DH spans P844–E1111. Residue H878 is the Proton acceptor; for dehydratase activity of the active site. Residues A984–E1111 are C-terminal hotdog fold. The active-site Proton donor; for dehydratase activity is the D1034. The residue at position 1475 (C1475) is an S-nitrosocysteine. The tract at residues W1638–Q1866 is enoyl reductase. V1675 to A1692 lines the NADP(+) pocket. Residue K1708 is modified to N6-(pyridoxal phosphate)lysine. The beta-ketoacyl reductase stretch occupies residues Y1867 to V2119. Residue S1889–A1904 participates in NADP(+) binding. C2093 is subject to S-nitrosocysteine. A Carrier domain is found at K2120–E2200. S2158 carries the O-(pantetheine 4'-phosphoryl)serine modification. The interval K2209 to E2511 is thioesterase. Residues S2309 and H2482 each act as for thioesterase activity in the active site.

As to quaternary structure, homodimer which is arranged in a head to tail fashion. In terms of processing, S-nitrosylation of Fatty acid synthase at cysteine residues Cys-1475 or Cys-2093 is important for the enzyme dimerization. In adipocytes, S-nitrosylation of Fatty acid synthase occurs under physiological conditions and gradually increases during adipogenesis.

It carries out the reaction acetyl-CoA + n malonyl-CoA + 2n NADPH + 2n H(+) = a long-chain fatty acid + (n+1) CoA + n CO2 + 2n NADP(+).. The catalysed reaction is holo-[ACP] + acetyl-CoA = acetyl-[ACP] + CoA. The enzyme catalyses holo-[ACP] + malonyl-CoA = malonyl-[ACP] + CoA. It catalyses the reaction a fatty acyl-[ACP] + malonyl-[ACP] + H(+) = a 3-oxoacyl-[ACP] + holo-[ACP] + CO2. It carries out the reaction a (3R)-hydroxyacyl-[ACP] + NADP(+) = a 3-oxoacyl-[ACP] + NADPH + H(+). The catalysed reaction is a (3R)-hydroxyacyl-[ACP] = a (2E)-enoyl-[ACP] + H2O. The enzyme catalyses a 2,3-saturated acyl-[ACP] + NADP(+) = a (2E)-enoyl-[ACP] + NADPH + H(+). It catalyses the reaction hexadecanoyl-[ACP] + H2O = hexadecanoate + holo-[ACP] + H(+). It carries out the reaction acetyl-[ACP] + malonyl-[ACP] + H(+) = 3-oxobutanoyl-[ACP] + holo-[ACP] + CO2. The catalysed reaction is 3-oxobutanoyl-[ACP] + NADPH + H(+) = (3R)-hydroxybutanoyl-[ACP] + NADP(+). The enzyme catalyses (3R)-hydroxybutanoyl-[ACP] = (2E)-butenoyl-[ACP] + H2O. It catalyses the reaction (2E)-butenoyl-[ACP] + NADPH + H(+) = butanoyl-[ACP] + NADP(+). It carries out the reaction butanoyl-[ACP] + malonyl-[ACP] + H(+) = 3-oxohexanoyl-[ACP] + holo-[ACP] + CO2. The catalysed reaction is 3-oxohexanoyl-[ACP] + NADPH + H(+) = (3R)-hydroxyhexanoyl-[ACP] + NADP(+). The enzyme catalyses (3R)-hydroxyhexanoyl-[ACP] = (2E)-hexenoyl-[ACP] + H2O. It catalyses the reaction (2E)-hexenoyl-[ACP] + NADPH + H(+) = hexanoyl-[ACP] + NADP(+). It carries out the reaction hexanoyl-[ACP] + malonyl-[ACP] + H(+) = 3-oxooctanoyl-[ACP] + holo-[ACP] + CO2. The catalysed reaction is 3-oxooctanoyl-[ACP] + NADPH + H(+) = (3R)-hydroxyoctanoyl-[ACP] + NADP(+). The enzyme catalyses (3R)-hydroxyoctanoyl-[ACP] = (2E)-octenoyl-[ACP] + H2O. It catalyses the reaction (2E)-octenoyl-[ACP] + NADPH + H(+) = octanoyl-[ACP] + NADP(+). It carries out the reaction octanoyl-[ACP] + malonyl-[ACP] + H(+) = 3-oxodecanoyl-[ACP] + holo-[ACP] + CO2. The catalysed reaction is 3-oxodecanoyl-[ACP] + NADPH + H(+) = (3R)-hydroxydecanoyl-[ACP] + NADP(+). The enzyme catalyses (3R)-hydroxydecanoyl-[ACP] = (2E)-decenoyl-[ACP] + H2O. It catalyses the reaction (2E)-decenoyl-[ACP] + NADPH + H(+) = decanoyl-[ACP] + NADP(+). It carries out the reaction decanoyl-[ACP] + malonyl-[ACP] + H(+) = 3-oxododecanoyl-[ACP] + holo-[ACP] + CO2. The catalysed reaction is 3-oxododecanoyl-[ACP] + NADPH + H(+) = (3R)-hydroxydodecanoyl-[ACP] + NADP(+). The enzyme catalyses (3R)-hydroxydodecanoyl-[ACP] = (2E)-dodecenoyl-[ACP] + H2O. It catalyses the reaction (2E)-dodecenoyl-[ACP] + NADPH + H(+) = dodecanoyl-[ACP] + NADP(+). It carries out the reaction dodecanoyl-[ACP] + malonyl-[ACP] + H(+) = 3-oxotetradecanoyl-[ACP] + holo-[ACP] + CO2. The catalysed reaction is 3-oxotetradecanoyl-[ACP] + NADPH + H(+) = (3R)-hydroxytetradecanoyl-[ACP] + NADP(+). The enzyme catalyses (3R)-hydroxytetradecanoyl-[ACP] = (2E)-tetradecenoyl-[ACP] + H2O. It catalyses the reaction (2E)-tetradecenoyl-[ACP] + NADPH + H(+) = tetradecanoyl-[ACP] + NADP(+). It carries out the reaction tetradecanoyl-[ACP] + malonyl-[ACP] + H(+) = 3-oxohexadecanoyl-[ACP] + holo-[ACP] + CO2. The catalysed reaction is 3-oxohexadecanoyl-[ACP] + NADPH + H(+) = (3R)-hydroxyhexadecanoyl-[ACP] + NADP(+). The enzyme catalyses (3R)-hydroxyhexadecanoyl-[ACP] = (2E)-hexadecenoyl-[ACP] + H2O. It catalyses the reaction (2E)-hexadecenoyl-[ACP] + NADPH + H(+) = hexadecanoyl-[ACP] + NADP(+). It carries out the reaction hexadecanoyl-[ACP] + malonyl-[ACP] + H(+) = 3-oxooctadecanoyl-[ACP] + holo-[ACP] + CO2. The catalysed reaction is 3-oxooctadecanoyl-[ACP] + NADPH + H(+) = (3R)-hydroxyoctadecanoyl-[ACP] + NADP(+). The enzyme catalyses (3R)-hydroxyoctadecanoyl-[ACP] = (2E)-octadecenoyl-[ACP] + H2O. It catalyses the reaction (2E)-octadecenoyl-[ACP] + NADPH + H(+) = octadecanoyl-[ACP] + NADP(+). It carries out the reaction tetradecanoyl-[ACP] + H2O = tetradecanoate + holo-[ACP] + H(+). The catalysed reaction is octadecanoyl-[ACP] + H2O = octadecanoate + holo-[ACP] + H(+). Its pathway is lipid metabolism; fatty acid biosynthesis. With respect to regulation, cerulenin, a potent non-competitive pharmacological inhibitor of FAS, binds covalently to the active site of the condensing enzyme region, inactivating a key enzyme step in fatty acid synthesis. In terms of biological role, fatty acid synthetase is a multifunctional enzyme that catalyzes the de novo biosynthesis of long-chain saturated fatty acids starting from acetyl-CoA and malonyl-CoA in the presence of NADPH. This multifunctional protein contains 7 catalytic activities and a site for the binding of the prosthetic group 4'-phosphopantetheine of the acyl carrier protein ([ACP]) domain. The sequence is that of Fatty acid synthase (FASN) from Gallus gallus (Chicken).